A 202-amino-acid chain; its full sequence is Probable nicotinate-nucleotide adenylyltransferase (202 aa).

This sequence belongs to the NadD family.

The catalysed reaction is nicotinate beta-D-ribonucleotide + ATP + H(+) = deamido-NAD(+) + diphosphate. Its pathway is cofactor biosynthesis; NAD(+) biosynthesis; deamido-NAD(+) from nicotinate D-ribonucleotide: step 1/1. In terms of biological role, catalyzes the reversible adenylation of nicotinate mononucleotide (NaMN) to nicotinic acid adenine dinucleotide (NaAD). This Clostridium perfringens (strain ATCC 13124 / DSM 756 / JCM 1290 / NCIMB 6125 / NCTC 8237 / Type A) protein is Probable nicotinate-nucleotide adenylyltransferase.